The sequence spans 243 residues: 7-cyano-7-deazaguanine synthase (243 aa).

9 to 19 (FSGGQDSTTCL) is a binding site for ATP. Positions 205, 220, 223, and 226 each coordinate Zn(2+).

It belongs to the QueC family. Zn(2+) is required as a cofactor.

It catalyses the reaction 7-carboxy-7-deazaguanine + NH4(+) + ATP = 7-cyano-7-deazaguanine + ADP + phosphate + H2O + H(+). Its pathway is purine metabolism; 7-cyano-7-deazaguanine biosynthesis. Catalyzes the ATP-dependent conversion of 7-carboxy-7-deazaguanine (CDG) to 7-cyano-7-deazaguanine (preQ(0)). In Albidiferax ferrireducens (strain ATCC BAA-621 / DSM 15236 / T118) (Rhodoferax ferrireducens), this protein is 7-cyano-7-deazaguanine synthase.